The sequence spans 96 residues: Phosphoribosyl-ATP pyrophosphatase (96 aa).

This sequence belongs to the PRA-PH family.

The protein resides in the cytoplasm. It carries out the reaction 1-(5-phospho-beta-D-ribosyl)-ATP + H2O = 1-(5-phospho-beta-D-ribosyl)-5'-AMP + diphosphate + H(+). It participates in amino-acid biosynthesis; L-histidine biosynthesis; L-histidine from 5-phospho-alpha-D-ribose 1-diphosphate: step 2/9. In Methanobrevibacter smithii (strain ATCC 35061 / DSM 861 / OCM 144 / PS), this protein is Phosphoribosyl-ATP pyrophosphatase.